A 137-amino-acid chain; its full sequence is MLQPKRTKFRKQFKGRIHGASKGGTDLNFGAYGLKVVEPERITARQIEAARRAITRYMKRSGRVWIRVFPDLPVTSKPTEVRMGKGKGSVDYWAARVAPGRIMFELDGVPEDVAREALRLGAAKLPIKTRFIQRIVE.

The protein belongs to the universal ribosomal protein uL16 family. Part of the 50S ribosomal subunit.

In terms of biological role, binds 23S rRNA and is also seen to make contacts with the A and possibly P site tRNAs. The protein is Large ribosomal subunit protein uL16 of Bartonella bacilliformis (strain ATCC 35685 / KC583 / Herrer 020/F12,63).